A 131-amino-acid polypeptide reads, in one-letter code: Small ribosomal subunit protein uS11 (131 aa).

This sequence belongs to the universal ribosomal protein uS11 family. As to quaternary structure, part of the 30S ribosomal subunit. Interacts with proteins S7 and S18. Binds to IF-3.

In terms of biological role, located on the platform of the 30S subunit, it bridges several disparate RNA helices of the 16S rRNA. Forms part of the Shine-Dalgarno cleft in the 70S ribosome. This chain is Small ribosomal subunit protein uS11, found in Granulibacter bethesdensis (strain ATCC BAA-1260 / CGDNIH1).